We begin with the raw amino-acid sequence, 397 residues long: Mannonate dehydratase (397 aa).

It belongs to the mannonate dehydratase family. The cofactor is Fe(2+). Mn(2+) is required as a cofactor.

It catalyses the reaction D-mannonate = 2-dehydro-3-deoxy-D-gluconate + H2O. Its pathway is carbohydrate metabolism; pentose and glucuronate interconversion. In terms of biological role, catalyzes the dehydration of D-mannonate. The chain is Mannonate dehydratase from Yersinia pseudotuberculosis serotype O:1b (strain IP 31758).